The chain runs to 49 residues: Large ribosomal subunit protein bL33B (49 aa).

It belongs to the bacterial ribosomal protein bL33 family.

This chain is Large ribosomal subunit protein bL33B, found in Limosilactobacillus fermentum (strain NBRC 3956 / LMG 18251) (Lactobacillus fermentum).